Consider the following 417-residue polypeptide: Probable diacetyl reductase [(R)-acetoin forming] 2 (417 aa).

Zn(2+) is bound at residue cysteine 39. Serine 63 bears the Phosphoserine mark. Histidine 64, cysteine 120, cysteine 123, cysteine 131, and glutamine 173 together coordinate Zn(2+). Residues 380–417 (GELNREADNEKKEISELSSRKDQERLRESINEAKLRHT) are disordered. Residues 381–417 (ELNREADNEKKEISELSSRKDQERLRESINEAKLRHT) show a composition bias toward basic and acidic residues.

The protein belongs to the zinc-containing alcohol dehydrogenase family. Zn(2+) serves as cofactor.

The protein resides in the cytoplasm. Its subcellular location is the nucleus. It catalyses the reaction (R)-acetoin + NAD(+) = diacetyl + NADH + H(+). Its function is as follows. Catalyzes the irreversible reduction of 2,3-butanediol to (S)-acetoin in the presence of NADH. In Saccharomyces cerevisiae (strain ATCC 204508 / S288c) (Baker's yeast), this protein is Probable diacetyl reductase [(R)-acetoin forming] 2 (BDH2).